Consider the following 247-residue polypeptide: 2,3-bisphosphoglycerate-dependent phosphoglycerate mutase (247 aa).

Residues Arg8 to Asn15, Thr21 to Gly22, Arg60, Glu87 to Tyr90, Lys98, Arg114 to Arg115, and Gly183 to Asn184 each bind substrate. The Tele-phosphohistidine intermediate role is filled by His9. Glu87 functions as the Proton donor/acceptor in the catalytic mechanism.

The protein belongs to the phosphoglycerate mutase family. BPG-dependent PGAM subfamily.

The catalysed reaction is (2R)-2-phosphoglycerate = (2R)-3-phosphoglycerate. It functions in the pathway carbohydrate degradation; glycolysis; pyruvate from D-glyceraldehyde 3-phosphate: step 3/5. Catalyzes the interconversion of 2-phosphoglycerate and 3-phosphoglycerate. The polypeptide is 2,3-bisphosphoglycerate-dependent phosphoglycerate mutase (Chlorobaculum parvum (strain DSM 263 / NCIMB 8327) (Chlorobium vibrioforme subsp. thiosulfatophilum)).